We begin with the raw amino-acid sequence, 1017 residues long: uncharacterized protein (1017 aa).

The segment at residues 1–34 (MGNLTMSRRTFVKTAAITGAAAAAFGASTHTALA) is a signal peptide (tat-type signal). In terms of domain architecture, 4Fe-4S Mo/W bis-MGD-type spans 45–103 (DTVAVKTCCRGCGKMECGVKVIVQNGRAIRVEGDEGAFQSMGNCCTKSQSSIQAAYHPD). Residues cysteine 53, cysteine 56, cysteine 61, and cysteine 89 each contribute to the [4Fe-4S] cluster site. Lysine 91 acts as the Electron donor/acceptor in catalysis.

The protein belongs to the prokaryotic molybdopterin-containing oxidoreductase family. Requires [4Fe-4S] cluster as cofactor. It depends on Mo-bis(molybdopterin guanine dinucleotide) as a cofactor. Predicted to be exported by the Tat system. The position of the signal peptide cleavage has not been experimentally proven.

This is an uncharacterized protein from Eggerthella lenta (strain ATCC 25559 / DSM 2243 / CCUG 17323 / JCM 9979 / KCTC 3265 / NCTC 11813 / VPI 0255 / 1899 B) (Eubacterium lentum).